Reading from the N-terminus, the 296-residue chain is 3-methyl-2-oxobutanoate hydroxymethyltransferase (296 aa).

Positions 1 to 33 (MDASDTPTHPAPHPADPAATPYGAPTTPPRPLR) are disordered. The segment covering 16–25 (DPAATPYGAP) has biased composition (low complexity). 2 residues coordinate Mg(2+): Asp77 and Asp116. 3-methyl-2-oxobutanoate contacts are provided by residues 77–78 (DS), Asp116, and Lys146. Glu148 is a Mg(2+) binding site. Residue Glu214 is the Proton acceptor of the active site.

The protein belongs to the PanB family. In terms of assembly, homodecamer; pentamer of dimers. Mg(2+) serves as cofactor.

The protein resides in the cytoplasm. The catalysed reaction is 3-methyl-2-oxobutanoate + (6R)-5,10-methylene-5,6,7,8-tetrahydrofolate + H2O = 2-dehydropantoate + (6S)-5,6,7,8-tetrahydrofolate. It functions in the pathway cofactor biosynthesis; (R)-pantothenate biosynthesis; (R)-pantoate from 3-methyl-2-oxobutanoate: step 1/2. Its function is as follows. Catalyzes the reversible reaction in which hydroxymethyl group from 5,10-methylenetetrahydrofolate is transferred onto alpha-ketoisovalerate to form ketopantoate. In Frankia casuarinae (strain DSM 45818 / CECT 9043 / HFP020203 / CcI3), this protein is 3-methyl-2-oxobutanoate hydroxymethyltransferase.